The primary structure comprises 667 residues: Protein adenylyltransferase SelO, mitochondrial (667 aa).

A mitochondrion-targeting transit peptide spans 1–6; that stretch reads MASVRA. 7 residues coordinate ATP: glycine 154, glycine 156, lysine 177, aspartate 189, glycine 190, arginine 247, and arginine 254. Residue aspartate 341 is the Proton acceptor of the active site. Mg(2+) contacts are provided by asparagine 342 and aspartate 351. An ATP-binding site is contributed by aspartate 351. A disordered region spans residues 628 to 652; it reads YHSEEEATGPEAVARSTEEQSSYSN. A Phosphothreonine modification is found at threonine 635. Serine 651 carries the post-translational modification Phosphoserine. A non-standard amino acid (selenocysteine) is located at residue selenocysteine 665.

It belongs to the SELO family. Requires Mg(2+) as cofactor.

Its subcellular location is the mitochondrion. It carries out the reaction L-tyrosyl-[protein] + ATP = O-(5'-adenylyl)-L-tyrosyl-[protein] + diphosphate. It catalyses the reaction L-threonyl-[protein] + ATP = 3-O-(5'-adenylyl)-L-threonyl-[protein] + diphosphate. The catalysed reaction is L-seryl-[protein] + ATP = 3-O-(5'-adenylyl)-L-seryl-[protein] + diphosphate. Its function is as follows. Catalyzes the transfer of adenosine 5'-monophosphate (AMP) to Ser, Thr and Tyr residues of target proteins (AMPylation). May be a redox-active mitochondrial selenoprotein which interacts with a redox target protein. The protein is Protein adenylyltransferase SelO, mitochondrial of Mus musculus (Mouse).